Here is a 176-residue protein sequence, read N- to C-terminus: Large ribosomal subunit protein uL6 (176 aa).

The protein belongs to the universal ribosomal protein uL6 family. In terms of assembly, part of the 50S ribosomal subunit.

This protein binds to the 23S rRNA, and is important in its secondary structure. It is located near the subunit interface in the base of the L7/L12 stalk, and near the tRNA binding site of the peptidyltransferase center. The polypeptide is Large ribosomal subunit protein uL6 (Burkholderia lata (strain ATCC 17760 / DSM 23089 / LMG 22485 / NCIMB 9086 / R18194 / 383)).